The sequence spans 60 residues: UPF0434 protein HCH_02705 (60 aa).

This sequence belongs to the UPF0434 family.

The protein is UPF0434 protein HCH_02705 of Hahella chejuensis (strain KCTC 2396).